The sequence spans 224 residues: MGQKGCPVGFRTAVTKKWRSLWYGNNQEFGKFLIEDVKIREFLKKKPSCQGAAGFVVKRMSGKIEVTIHTARPGLVIGKKGAEVESLKAELKKLTGKDVWVEIAEVKRPELNAQLVADGIAKQIERRVSFRRAMKKALQSVMDAGALGVKVQVSGRLAGAEIARSEWYKNGRVPLHTLRADIDYATASAETTYGIIGIKVWINLGEKKAVPAANHAGAASTAAA.

The KH type-2 domain occupies 39–107; it reads IREFLKKKPS…DVWVEIAEVK (69 aa).

This sequence belongs to the universal ribosomal protein uS3 family. As to quaternary structure, part of the 30S ribosomal subunit. Forms a tight complex with proteins S10 and S14.

Functionally, binds the lower part of the 30S subunit head. Binds mRNA in the 70S ribosome, positioning it for translation. The chain is Small ribosomal subunit protein uS3 from Chlamydia trachomatis serovar L2 (strain ATCC VR-902B / DSM 19102 / 434/Bu).